The primary structure comprises 124 residues: Fluoride-specific ion channel FluC (124 aa).

A run of 3 helical transmembrane segments spans residues 20–40 (LLSI…TLLV), 60–80 (ISPE…TTFS), and 102–122 (VLLN…LIFS). 2 residues coordinate Na(+): G74 and T77.

The protein belongs to the fluoride channel Fluc/FEX (TC 1.A.43) family.

It is found in the cell inner membrane. The catalysed reaction is fluoride(in) = fluoride(out). Na(+) is not transported, but it plays an essential structural role and its presence is essential for fluoride channel function. Functionally, fluoride-specific ion channel. Important for reducing fluoride concentration in the cell, thus reducing its toxicity. The chain is Fluoride-specific ion channel FluC from Shewanella frigidimarina (strain NCIMB 400).